The following is a 160-amino-acid chain: Protein-export protein SecB (160 aa).

The protein belongs to the SecB family. As to quaternary structure, homotetramer, a dimer of dimers. One homotetramer interacts with 1 SecA dimer.

It is found in the cytoplasm. Its function is as follows. One of the proteins required for the normal export of preproteins out of the cell cytoplasm. It is a molecular chaperone that binds to a subset of precursor proteins, maintaining them in a translocation-competent state. It also specifically binds to its receptor SecA. The chain is Protein-export protein SecB from Rhodospirillum rubrum (strain ATCC 11170 / ATH 1.1.1 / DSM 467 / LMG 4362 / NCIMB 8255 / S1).